Here is a 120-residue protein sequence, read N- to C-terminus: Glycophorin-A (120 aa).

A Pyrrolidone carboxylic acid modification is found at glutamine 1. The segment at glutamine 1 to leucine 40 is disordered. Residues threonine 2 and threonine 5 are each glycosylated (O-linked (GalNAc...) threonine). Residue serine 7 is glycosylated (O-linked (GalNAc...) serine). A glycan (O-linked (GalNAc...) threonine) is linked at threonine 13. O-linked (GalNAc...) serine glycosylation occurs at serine 17. Low complexity predominate over residues serine 17 to threonine 29. O-linked (GalNAc...) threonine glycosylation is found at threonine 18 and threonine 20. Serine 21 carries O-linked (GalNAc...) serine glycosylation. O-linked (GalNAc...) threonine glycans are attached at residues threonine 24 and threonine 28. The chain crosses the membrane as a helical span at residues valine 50 to valine 72. The segment at lysine 78 to glutamine 120 is disordered. Residues alanine 82–valine 100 show a composition bias toward pro residues. A compositionally biased stretch (polar residues) spans serine 107–glutamine 120. The residue at position 119 (serine 119) is a Phosphoserine.

It belongs to the glycophorin-A family. In terms of assembly, homodimer.

The protein localises to the membrane. In terms of biological role, glycophorin A is the major intrinsic membrane sialoglycoprotein of the erythrocyte. Appears to be important for the function of SLC4A1 and is required for high activity of SLC4A1. May be involved in translocation of SLC4A1 to the plasma membrane. The chain is Glycophorin-A from Equus caballus (Horse).